Consider the following 208-residue polypeptide: Uracil phosphoribosyltransferase (208 aa).

5-phospho-alpha-D-ribose 1-diphosphate is bound by residues Arg78, Arg103, and 130–138 (DPMLATGGS). Uracil-binding positions include Ile193 and 198–200 (GDA). A 5-phospho-alpha-D-ribose 1-diphosphate-binding site is contributed by Asp199.

Belongs to the UPRTase family. The cofactor is Mg(2+).

It catalyses the reaction UMP + diphosphate = 5-phospho-alpha-D-ribose 1-diphosphate + uracil. The protein operates within pyrimidine metabolism; UMP biosynthesis via salvage pathway; UMP from uracil: step 1/1. Its activity is regulated as follows. Allosterically activated by GTP. Its function is as follows. Catalyzes the conversion of uracil and 5-phospho-alpha-D-ribose 1-diphosphate (PRPP) to UMP and diphosphate. In Yersinia pestis, this protein is Uracil phosphoribosyltransferase.